Reading from the N-terminus, the 129-residue chain is Azurin-1 (129 aa).

The region spanning 1–129 is the Plastocyanin-like domain; that stretch reads AECSVDIAGN…LMKGVLKLVD (129 aa). Cys-3 and Cys-26 are disulfide-bonded. Positions 46, 112, 117, and 121 each coordinate Cu cation.

The protein resides in the periplasm. Transfers electrons from cytochrome c551 to cytochrome oxidase. The protein is Azurin-1 of Alcaligenes xylosoxydans xylosoxydans (Achromobacter xylosoxidans).